A 122-amino-acid chain; its full sequence is uncharacterized protein (122 aa).

This is an uncharacterized protein from Mycoplasma pneumoniae (strain ATCC 29342 / M129 / Subtype 1) (Mycoplasmoides pneumoniae).